Here is a 523-residue protein sequence, read N- to C-terminus: Rho guanine nucleotide exchange factor 8 (523 aa).

The segment covering 44-57 has biased composition (polar residues); sequence VESNTPESQNSDSF. 2 disordered regions span residues 44–83 and 442–523; these read VESNTPESQNSDSFVESPVESSLPMISPLTRPGKRSERQQ and ETSD…KDRH. The PRONE domain occupies 76–440; it reads GKRSERQQAD…TLALKQTLLA (365 aa). Residues 465–475 show a composition bias toward basic and acidic residues; that stretch reads EAEKHDPHSKT.

In terms of assembly, homodimer. The homodimer interacts with ARAC5/ROP4. Interacts with ARAC11/ROP1 and ARAC10/ROP11. Interacts with PRK6. In terms of tissue distribution, expressed in pollen grains and pollen tubes.

Its subcellular location is the cell membrane. Its function is as follows. Guanine-nucleotide exchange factor (GEF) that acts as an activator of Rop (Rho of plants) GTPases by promoting the exchange of GDP for GTP. Active as homodimer. The chain is Rho guanine nucleotide exchange factor 8 from Arabidopsis thaliana (Mouse-ear cress).